We begin with the raw amino-acid sequence, 574 residues long: Putative ABC transporter ATP-binding protein VVA0347 (574 aa).

2 ABC transporter domains span residues Ile3 to Glu244 and Leu299 to Thr533. Residues Gly37–Ser44 and Gly332–Ser339 each bind ATP.

This sequence belongs to the ABC transporter superfamily.

It is found in the cell inner membrane. Its function is as follows. Probably part of an ABC transporter complex. Responsible for energy coupling to the transport system. This chain is Putative ABC transporter ATP-binding protein VVA0347, found in Vibrio vulnificus (strain YJ016).